Here is a 471-residue protein sequence, read N- to C-terminus: Uronate isomerase (471 aa).

The protein belongs to the metallo-dependent hydrolases superfamily. Uronate isomerase family.

The catalysed reaction is D-glucuronate = D-fructuronate. It catalyses the reaction aldehydo-D-galacturonate = keto-D-tagaturonate. The protein operates within carbohydrate metabolism; pentose and glucuronate interconversion. The polypeptide is Uronate isomerase (Xanthomonas campestris pv. campestris (strain B100)).